The primary structure comprises 361 residues: MLYWLIDLSSSFPAFNVFRYITFRTGGAMVTGALFVFMFGPWIIDNLRLRQGKGQPIRTDGPQSHLMTKKGTPTMGGLMILSGLTVGTVLWANPLNPYVWIVLAVTLGFGFVGFYDDYMKVTKQTHAGISGRTRLLIEFIIAGAACFALVWLGRAPLSSSLVIPFFKEVMLNLGWAFVVFGAFVVVGAGNAVNLTDGLDGLAIVPVMIAAASFGLISYLAGNAVFAEYLQINYVAGTGELAVLCGALLGAGLGFLWFNAPPASIFMGDTGSLALGGMLGSIAVAVKHEIVLAVIGGLFVLEAVSVIVQVASFKLTGKRVFKMAPIHHHFEQKGWTEPQIVIRFWIIAVMLALAGLSTLKLR.

Transmembrane regions (helical) follow at residues 25–45, 72–92, 95–115, 135–155, 169–189, 200–220, 240–260, 264–284, 289–309, and 338–358; these read TGGA…WIID, TPTM…VLWA, LNPY…VGFY, LLIE…LGRA, VMLN…VGAG, GLAI…SYLA, LAVL…FNAP, IFMG…IAVA, IVLA…IVQV, and QIVI…LSTL.

Belongs to the glycosyltransferase 4 family. MraY subfamily. Mg(2+) serves as cofactor.

It is found in the cell inner membrane. The enzyme catalyses UDP-N-acetyl-alpha-D-muramoyl-L-alanyl-gamma-D-glutamyl-meso-2,6-diaminopimeloyl-D-alanyl-D-alanine + di-trans,octa-cis-undecaprenyl phosphate = di-trans,octa-cis-undecaprenyl diphospho-N-acetyl-alpha-D-muramoyl-L-alanyl-D-glutamyl-meso-2,6-diaminopimeloyl-D-alanyl-D-alanine + UMP. The protein operates within cell wall biogenesis; peptidoglycan biosynthesis. In terms of biological role, catalyzes the initial step of the lipid cycle reactions in the biosynthesis of the cell wall peptidoglycan: transfers peptidoglycan precursor phospho-MurNAc-pentapeptide from UDP-MurNAc-pentapeptide onto the lipid carrier undecaprenyl phosphate, yielding undecaprenyl-pyrophosphoryl-MurNAc-pentapeptide, known as lipid I. This Rhodopseudomonas palustris (strain TIE-1) protein is Phospho-N-acetylmuramoyl-pentapeptide-transferase.